Here is a 343-residue protein sequence, read N- to C-terminus: Anthranilate phosphoribosyltransferase (343 aa).

Residues Gly-79, 82–83, Thr-87, 89–92, 106–114, and Ser-118 each bind 5-phospho-alpha-D-ribose 1-diphosphate; these read GD, NVST, and KHGNRAASS. Gly-79 contributes to the anthranilate binding site. Mg(2+) is bound at residue Ser-91. Anthranilate is bound at residue Asn-109. Arg-164 serves as a coordination point for anthranilate. Mg(2+) contacts are provided by Asp-223 and Glu-224.

It belongs to the anthranilate phosphoribosyltransferase family. As to quaternary structure, homodimer. Mg(2+) serves as cofactor.

It catalyses the reaction N-(5-phospho-beta-D-ribosyl)anthranilate + diphosphate = 5-phospho-alpha-D-ribose 1-diphosphate + anthranilate. It participates in amino-acid biosynthesis; L-tryptophan biosynthesis; L-tryptophan from chorismate: step 2/5. Functionally, catalyzes the transfer of the phosphoribosyl group of 5-phosphorylribose-1-pyrophosphate (PRPP) to anthranilate to yield N-(5'-phosphoribosyl)-anthranilate (PRA). This is Anthranilate phosphoribosyltransferase from Metallosphaera sedula (strain ATCC 51363 / DSM 5348 / JCM 9185 / NBRC 15509 / TH2).